The chain runs to 345 residues: Methylthioribose-1-phosphate isomerase (345 aa).

Substrate contacts are provided by residues 47–49 (RGA), Arg90, and Gln197. Catalysis depends on Asp238, which acts as the Proton donor. 248–249 (NK) contacts substrate.

The protein belongs to the eIF-2B alpha/beta/delta subunits family. MtnA subfamily.

The enzyme catalyses 5-(methylsulfanyl)-alpha-D-ribose 1-phosphate = 5-(methylsulfanyl)-D-ribulose 1-phosphate. The protein operates within amino-acid biosynthesis; L-methionine biosynthesis via salvage pathway; L-methionine from S-methyl-5-thio-alpha-D-ribose 1-phosphate: step 1/6. In terms of biological role, catalyzes the interconversion of methylthioribose-1-phosphate (MTR-1-P) into methylthioribulose-1-phosphate (MTRu-1-P). This Thermoanaerobacter pseudethanolicus (strain ATCC 33223 / 39E) (Clostridium thermohydrosulfuricum) protein is Methylthioribose-1-phosphate isomerase.